Consider the following 295-residue polypeptide: Sulfotransferase 1E1 (295 aa).

48 to 53 is a 3'-phosphoadenylyl sulfate binding site; it reads KSGTTW. 106–108 is a binding site for substrate; the sequence is KTH. His108 (proton acceptor) is an active-site residue. 3'-phosphoadenylyl sulfate is bound by residues Arg130 and Ser138. Ser156 bears the Phosphoserine mark. 3'-phosphoadenylyl sulfate is bound by residues Tyr193, 227–232, and 257–259; these read TSFQEM and RKG.

This sequence belongs to the sulfotransferase 1 family. Homodimer. Testis and at very low level in the placenta.

The protein localises to the cytoplasm. It is found in the cytosol. The enzyme catalyses estrone + 3'-phosphoadenylyl sulfate = estrone 3-sulfate + adenosine 3',5'-bisphosphate + H(+). It catalyses the reaction 17beta-estradiol + 3'-phosphoadenylyl sulfate = 17beta-estradiol 3-sulfate + adenosine 3',5'-bisphosphate + H(+). The catalysed reaction is (24S)-hydroxycholesterol + 3'-phosphoadenylyl sulfate = (24S)-hydroxycholesterol 3-sulfate + adenosine 3',5'-bisphosphate + H(+). It carries out the reaction 3beta-hydroxyandrost-5-en-17-one + 3'-phosphoadenylyl sulfate = dehydroepiandrosterone 3-sulfate + adenosine 3',5'-bisphosphate + H(+). The enzyme catalyses 4-ethylphenol + 3'-phosphoadenylyl sulfate = 4-ethylphenyl sulfate + adenosine 3',5'-bisphosphate + H(+). With respect to regulation, inhibited by estradiol. In terms of biological role, sulfotransferase that utilizes 3'-phospho-5'-adenylyl sulfate (PAPS) as sulfonate donor to catalyze the sulfate conjugation of estradiol and estrone. Is a key enzyme in estrogen homeostasis, the sulfation of estrogens leads to their inactivation. Also sulfates dehydroepiandrosterone, pregnenolone, (24S)-hydroxycholesterol and xenobiotic compounds like ethinylestradiol, equalenin, diethyl stilbesterol and 1-naphthol at significantly lower efficiency. Does not sulfonate cortisol, testosterone and dopamine. May play a role in gut microbiota-host metabolic interaction. O-sulfonates 4-ethylphenol (4-EP), a dietary tyrosine-derived metabolite produced by gut bacteria. The product 4-EPS crosses the blood-brain barrier and may negatively regulate oligodendrocyte maturation and myelination, affecting the functional connectivity of different brain regions associated with the limbic system. This is Sulfotransferase 1E1 (Sult1e1) from Mus musculus (Mouse).